The following is a 150-amino-acid chain: Large ribosomal subunit protein bL9 (150 aa).

Belongs to the bacterial ribosomal protein bL9 family.

Functionally, binds to the 23S rRNA. This is Large ribosomal subunit protein bL9 from Shewanella frigidimarina (strain NCIMB 400).